The sequence spans 278 residues: 4-deoxy-L-threo-5-hexosulose-uronate ketol-isomerase (278 aa).

4 residues coordinate Zn(2+): H196, H198, E203, and H245.

This sequence belongs to the KduI family. Requires Zn(2+) as cofactor.

It catalyses the reaction 5-dehydro-4-deoxy-D-glucuronate = 3-deoxy-D-glycero-2,5-hexodiulosonate. It participates in glycan metabolism; pectin degradation; 2-dehydro-3-deoxy-D-gluconate from pectin: step 4/5. Functionally, catalyzes the isomerization of 5-dehydro-4-deoxy-D-glucuronate to 3-deoxy-D-glycero-2,5-hexodiulosonate. The protein is 4-deoxy-L-threo-5-hexosulose-uronate ketol-isomerase of Salmonella typhimurium (strain LT2 / SGSC1412 / ATCC 700720).